The following is a 205-amino-acid chain: Guanylate kinase (205 aa).

A Guanylate kinase-like domain is found at 6 to 184; that stretch reads GLLIVLSGPA…AVERIKAIVT (179 aa). Residue 13–20 participates in ATP binding; sequence GPAGVGKG.

The protein belongs to the guanylate kinase family.

It localises to the cytoplasm. The enzyme catalyses GMP + ATP = GDP + ADP. Its function is as follows. Essential for recycling GMP and indirectly, cGMP. This is Guanylate kinase from Shouchella clausii (strain KSM-K16) (Alkalihalobacillus clausii).